The sequence spans 1811 residues: ADP-ribosylation factor guanine nucleotide-exchange factor sec71 (1811 aa).

Disordered stretches follow at residues 1–108 (MTDL…TSEA) and 316–336 (INMNKSSSNGTPDRANSPIPS). 3 stretches are compositionally biased toward basic and acidic residues: residues 33–49 (STIKSRVSDEIDEHDSI), 57–73 (KSIEINDKNLEAEKDIE), and 80–91 (PPEDDLDSRSIE). A Phosphoserine modification is found at Ser40. Composition is skewed to polar residues over residues 92 to 108 (SEQTGTLSKQTTSTSEA) and 316 to 326 (INMNKSSSNGT). Thr326 carries the phosphothreonine modification. 2 positions are modified to phosphoserine: Ser332 and Ser353. Positions 533–537 (NYDCI) match the HUS box motif. The segment covering 643–663 (TAKDDETESTSKGEEPQKSKS) has biased composition (basic and acidic residues). The disordered stretch occupies residues 643-688 (TAKDDETESTSKGEEPQKSKSEPPSAGINSTSMDNLESSGQALATD). Over residues 669–688 (GINSTSMDNLESSGQALATD) the composition is skewed to polar residues. Residues 692-880 (QFENLKHRKK…TEVYEEIQKN (189 aa)) form the SEC7 domain. Ser741 carries the phosphoserine modification. Thr742 is subject to Phosphothreonine. Asp812 provides a ligand contact to Mg(2+). Residues 889-1103 (DPTSNFPEIP…TTKPLRKSLD (215 aa)) form an HDS1 domain region.

It localises to the cytoplasm. Its subcellular location is the golgi apparatus. It is found in the trans-Golgi network. The protein localises to the cytoplasmic vesicle. The protein resides in the COPI-coated vesicle membrane. It localises to the COPII-coated vesicle membrane. Its function is as follows. Guanine exchange factor that acts as an activator of arf1 at the trans-Golgi net-work and is thus involved in vesicular budding and traffic between compartments of the Golgi apparatus. Activation of Arf (ADP-ribosylation factor) GTPases is essential for vesicle formation via recruitment of cargo adapters and coat proteins necessary for Golgi trafficking. Involved in tunicamycin-induced ER stress response and subsequent apoptosis. This Schizosaccharomyces pombe (strain 972 / ATCC 24843) (Fission yeast) protein is ADP-ribosylation factor guanine nucleotide-exchange factor sec71.